Consider the following 189-residue polypeptide: MKTGKELKPGTVLRIDNDPWLVQKAEFTKSGRNSAIMKTKLKNLLTGYKTETVYGADDKLDDVILDRKEATLSFINGDEYTFMDTTDYTMYELNAEDIEAVLPYIEEGMEDVCEAVFFEGRLVSVELPTTISRKVVYTENAARGDTSGKVMKPAKLANGTEISVADFIQIDEWIDIDTRDNSFKGRSKK.

It belongs to the elongation factor P family.

The protein localises to the cytoplasm. It functions in the pathway protein biosynthesis; polypeptide chain elongation. In terms of biological role, involved in peptide bond synthesis. Stimulates efficient translation and peptide-bond synthesis on native or reconstituted 70S ribosomes in vitro. Probably functions indirectly by altering the affinity of the ribosome for aminoacyl-tRNA, thus increasing their reactivity as acceptors for peptidyl transferase. The protein is Elongation factor P of Pseudomonas putida (strain ATCC 700007 / DSM 6899 / JCM 31910 / BCRC 17059 / LMG 24140 / F1).